Consider the following 310-residue polypeptide: Vomeronasal type-1 receptor 44 (310 aa).

The Extracellular portion of the chain corresponds to 1–20; it reads MNKANLLHIDTNIKITLLAE. A helical membrane pass occupies residues 21–41; that stretch reads VSVGISANSILFIAYLCMLLG. The Cytoplasmic portion of the chain corresponds to 42-50; the sequence is ENRHKPIDL. A helical transmembrane segment spans residues 51–71; sequence YIAFLSLTQLMLLITMGLIAV. Residues 72–93 lie on the Extracellular side of the membrane; it reads DMFMPWGRWDSTTCQSLIYLHR. The cysteines at positions 85 and 172 are disulfide-linked. A helical transmembrane segment spans residues 94 to 114; that stretch reads FLRGLTLCATCLLNVLWTITL. Topologically, residues 115–131 are cytoplasmic; it reads SSRNSCLAKFKHKYPHH. A helical transmembrane segment spans residues 132–152; the sequence is ISGAFLFLCVLYMSFSSHFLV. The Extracellular segment spans residues 153-190; sequence SMTVTPNLTSENFMYVTQSCSLLPMSYSRTSMFSTPVA. Asn-159 is a glycosylation site (N-linked (GlcNAc...) asparagine). Residues 191–211 form a helical membrane-spanning segment; it reads IRETFLISLMALSSGYMVALL. Over 212–238 the chain is Cytoplasmic; that stretch reads WRHKKQAQHLRSTSLSSKASPEQRATR. The helical transmembrane segment at 239–259 threads the bilayer; that stretch reads TILLLMSFFVVFYILDTVIFH. Residues 260–268 lie on the Extracellular side of the membrane; it reads SRMKFKDGS. A helical membrane pass occupies residues 269-289; the sequence is ILYCFQIIVSHSYVTVSPFVF. Topologically, residues 290–310 are cytoplasmic; it reads ICTEKHIIKFLRSMCGRIANI.

This sequence belongs to the G-protein coupled receptor 1 family.

It is found in the cell membrane. Functionally, putative pheromone receptor implicated in the regulation of social and reproductive behavior. The protein is Vomeronasal type-1 receptor 44 (Vmn1r44) of Mus musculus (Mouse).